Reading from the N-terminus, the 198-residue chain is NAD(P)H dehydrogenase (quinone) (198 aa).

The Flavodoxin-like domain maps to 4–189 (VLVLYYSMYG…SIARYQGEYV (186 aa)). FMN-binding positions include 10–15 (SMYGHI) and 78–80 (TRF). An NAD(+)-binding site is contributed by Y12. W98 is a binding site for substrate. Residues 113 to 118 (STGTGG) and H133 each bind FMN.

This sequence belongs to the WrbA family. FMN serves as cofactor.

It catalyses the reaction a quinone + NADH + H(+) = a quinol + NAD(+). It carries out the reaction a quinone + NADPH + H(+) = a quinol + NADP(+). This Escherichia fergusonii (strain ATCC 35469 / DSM 13698 / CCUG 18766 / IAM 14443 / JCM 21226 / LMG 7866 / NBRC 102419 / NCTC 12128 / CDC 0568-73) protein is NAD(P)H dehydrogenase (quinone).